The primary structure comprises 435 residues: Glutamyl-tRNA reductase (435 aa).

Substrate-binding positions include 50–53 (TCNR), S110, 115–117 (ETQ), and Q121. Catalysis depends on C51, which acts as the Nucleophile. 189-194 (GAGEMS) is an NADP(+) binding site.

The protein belongs to the glutamyl-tRNA reductase family. As to quaternary structure, homodimer.

It carries out the reaction (S)-4-amino-5-oxopentanoate + tRNA(Glu) + NADP(+) = L-glutamyl-tRNA(Glu) + NADPH + H(+). It participates in porphyrin-containing compound metabolism; protoporphyrin-IX biosynthesis; 5-aminolevulinate from L-glutamyl-tRNA(Glu): step 1/2. In terms of biological role, catalyzes the NADPH-dependent reduction of glutamyl-tRNA(Glu) to glutamate 1-semialdehyde (GSA). The chain is Glutamyl-tRNA reductase from Campylobacter lari (strain RM2100 / D67 / ATCC BAA-1060).